The primary structure comprises 183 residues: ATP synthase subunit delta (183 aa).

The protein belongs to the ATPase delta chain family. As to quaternary structure, F-type ATPases have 2 components, F(1) - the catalytic core - and F(0) - the membrane proton channel. F(1) has five subunits: alpha(3), beta(3), gamma(1), delta(1), epsilon(1). F(0) has three main subunits: a(1), b(2) and c(10-14). The alpha and beta chains form an alternating ring which encloses part of the gamma chain. F(1) is attached to F(0) by a central stalk formed by the gamma and epsilon chains, while a peripheral stalk is formed by the delta and b chains.

The protein localises to the cell inner membrane. Functionally, f(1)F(0) ATP synthase produces ATP from ADP in the presence of a proton or sodium gradient. F-type ATPases consist of two structural domains, F(1) containing the extramembraneous catalytic core and F(0) containing the membrane proton channel, linked together by a central stalk and a peripheral stalk. During catalysis, ATP synthesis in the catalytic domain of F(1) is coupled via a rotary mechanism of the central stalk subunits to proton translocation. Its function is as follows. This protein is part of the stalk that links CF(0) to CF(1). It either transmits conformational changes from CF(0) to CF(1) or is implicated in proton conduction. The sequence is that of ATP synthase subunit delta from Nitratidesulfovibrio vulgaris (strain ATCC 29579 / DSM 644 / CCUG 34227 / NCIMB 8303 / VKM B-1760 / Hildenborough) (Desulfovibrio vulgaris).